The chain runs to 200 residues: Large ribosomal subunit protein uL4 (200 aa).

The disordered stretch occupies residues 38–72; sequence GRQGTKQQKTRSDVAGGGKRPWRQKGTGRARAGTT.

This sequence belongs to the universal ribosomal protein uL4 family. Part of the 50S ribosomal subunit.

In terms of biological role, one of the primary rRNA binding proteins, this protein initially binds near the 5'-end of the 23S rRNA. It is important during the early stages of 50S assembly. It makes multiple contacts with different domains of the 23S rRNA in the assembled 50S subunit and ribosome. Functionally, forms part of the polypeptide exit tunnel. The polypeptide is Large ribosomal subunit protein uL4 (Pseudomonas entomophila (strain L48)).